We begin with the raw amino-acid sequence, 73 residues long: Tetrahydromethanopterin S-methyltransferase subunit G (73 aa).

Residues 48 to 68 (IGILYGAVVGLLLFLIYVSVS) traverse the membrane as a helical segment.

Belongs to the MtrG family. The complex is composed of 8 subunits; MtrA, MtrB, MtrC, MtrD, MtrE, MtrF, MtrG and MtrH.

It is found in the cell membrane. The enzyme catalyses 5-methyl-5,6,7,8-tetrahydromethanopterin + coenzyme M + 2 Na(+)(in) = 5,6,7,8-tetrahydromethanopterin + methyl-coenzyme M + 2 Na(+)(out). Its pathway is one-carbon metabolism; methanogenesis from CO(2); methyl-coenzyme M from 5,10-methylene-5,6,7,8-tetrahydromethanopterin: step 2/2. Functionally, part of a complex that catalyzes the formation of methyl-coenzyme M and tetrahydromethanopterin from coenzyme M and methyl-tetrahydromethanopterin. This is an energy-conserving, sodium-ion translocating step. The protein is Tetrahydromethanopterin S-methyltransferase subunit G of Methanosarcina acetivorans (strain ATCC 35395 / DSM 2834 / JCM 12185 / C2A).